Reading from the N-terminus, the 465-residue chain is Ribulose bisphosphate carboxylase large chain (465 aa).

K4 is subject to N6,N6,N6-trimethyllysine. Substrate contacts are provided by N113 and T163. The Proton acceptor role is filled by K165. A substrate-binding site is contributed by K167. Mg(2+) contacts are provided by K191, D193, and E194. K191 carries the N6-carboxylysine modification. H284 acts as the Proton acceptor in catalysis. The substrate site is built by R285, H317, and S369.

The protein belongs to the RuBisCO large chain family. Type I subfamily. In terms of assembly, heterohexadecamer of 8 large chains and 8 small chains; disulfide-linked. The disulfide link is formed within the large subunit homodimers. Mg(2+) is required as a cofactor. In terms of processing, the disulfide bond which can form in the large chain dimeric partners within the hexadecamer appears to be associated with oxidative stress and protein turnover.

It localises to the plastid. Its subcellular location is the chloroplast. The catalysed reaction is 2 (2R)-3-phosphoglycerate + 2 H(+) = D-ribulose 1,5-bisphosphate + CO2 + H2O. It catalyses the reaction D-ribulose 1,5-bisphosphate + O2 = 2-phosphoglycolate + (2R)-3-phosphoglycerate + 2 H(+). RuBisCO catalyzes two reactions: the carboxylation of D-ribulose 1,5-bisphosphate, the primary event in carbon dioxide fixation, as well as the oxidative fragmentation of the pentose substrate in the photorespiration process. Both reactions occur simultaneously and in competition at the same active site. This is Ribulose bisphosphate carboxylase large chain from Casuarina equisetifolia (Beach she-oak).